A 191-amino-acid chain; its full sequence is Probable chemoreceptor glutamine deamidase CheD (191 aa).

This sequence belongs to the CheD family.

The catalysed reaction is L-glutaminyl-[protein] + H2O = L-glutamyl-[protein] + NH4(+). Probably deamidates glutamine residues to glutamate on methyl-accepting chemotaxis receptors (MCPs), playing an important role in chemotaxis. The polypeptide is Probable chemoreceptor glutamine deamidase CheD (Hydrogenovibrio crunogenus (strain DSM 25203 / XCL-2) (Thiomicrospira crunogena)).